The sequence spans 258 residues: NAD kinase (258 aa).

D44 (proton acceptor) is an active-site residue. NAD(+)-binding positions include 44–45, 116–117, D146, A154, and 157–162; these read DG, NE, and TAYNLS.

It belongs to the NAD kinase family. A divalent metal cation serves as cofactor.

It is found in the cytoplasm. It carries out the reaction NAD(+) + ATP = ADP + NADP(+) + H(+). Functionally, involved in the regulation of the intracellular balance of NAD and NADP, and is a key enzyme in the biosynthesis of NADP. Catalyzes specifically the phosphorylation on 2'-hydroxyl of the adenosine moiety of NAD to yield NADP. The sequence is that of NAD kinase from Zymomonas mobilis subsp. mobilis (strain ATCC 31821 / ZM4 / CP4).